A 453-amino-acid chain; its full sequence is Growth/differentiation factor 9 (453 aa).

An N-terminal signal peptide occupies residues 1-27 (MALPNKFFLWFCCFAWLCFPISLDSLP). The propeptide occupies 28–318 (SRGEAQIVAR…EGVRSSRHRR (291 aa)). 4 N-linked (GlcNAc...) asparagine glycosylation sites follow: Asn163, Asn236, Asn255, and Asn269. A disordered region spans residues 304–328 (GEEAAEGVRSSRHRRDQESASSELK). The segment covering 318–328 (RDQESASSELK) has biased composition (basic and acidic residues). A glycan (N-linked (GlcNAc...) asparagine) is linked at Asn337. 3 cysteine pairs are disulfide-bonded: Cys352–Cys418, Cys381–Cys450, and Cys385–Cys452.

Belongs to the TGF-beta family. In terms of assembly, homodimer or heterodimer (Potential). But, in contrast to other members of this family, cannot be disulfide-linked. Phosphorylated; phosphorylation is critical for GDF9 function.

The protein localises to the secreted. In terms of biological role, required for ovarian folliculogenesis. The sequence is that of Growth/differentiation factor 9 (GDF9) from Ovis aries (Sheep).